Here is a 231-residue protein sequence, read N- to C-terminus: MLRKLAAELLGTFVLVFGGCGSVVFAAAFPELGIGFVGVSLAFGLTVLTMIYAVGHISGGHFNPAVTIGLWAGGRFRAVEVIPYIISQVIGGILAAAVLYVIASGQVGFDATTSGFASNGFGEHSPGGFSLQSAIVAEIVLTAIFLIVIIGATDRRAPPGFAPLAIGLALVLINLISIPITNTSVNPARSTAVAIFQNTWALEQLWFFWVMPIIGGIVGGGIYRLLFAEKQ.

2 helical membrane-spanning segments follow: residues 9-29 (LLGT…AAAF) and 34-54 (IGFV…IYAV). Residues 63 to 65 (NPA) carry the NPA 1 motif. 3 helical membrane-spanning segments follow: residues 82–102 (IPYI…LYVI), 133–153 (SAIV…IGAT), and 160–180 (GFAP…SIPI). An NPA 2 motif is present at residues 186-188 (NPA). A helical transmembrane segment spans residues 202 to 222 (LEQLWFFWVMPIIGGIVGGGI).

The protein belongs to the MIP/aquaporin (TC 1.A.8) family. Homotetramer.

It localises to the cell inner membrane. The catalysed reaction is H2O(in) = H2O(out). Its function is as follows. Channel that permits osmotically driven movement of water in both directions. It is involved in the osmoregulation and in the maintenance of cell turgor during volume expansion in rapidly growing cells. It mediates rapid entry or exit of water in response to abrupt changes in osmolarity. This is Aquaporin Z from Photorhabdus laumondii subsp. laumondii (strain DSM 15139 / CIP 105565 / TT01) (Photorhabdus luminescens subsp. laumondii).